Here is a 64-residue protein sequence, read N- to C-terminus: PYLa/PGLa B (64 aa).

The signal sequence occupies residues 1-20; that stretch reads MYKQIFLCLIIAALCATIMA. Residues 21-35 constitute a propeptide that is removed on maturation; sequence EASALADADDDDDKR. The residue at position 59 (L59) is a Leucine amide. Residues 60-64 constitute a propeptide that is removed on maturation; sequence GRRDS.

This sequence belongs to the gastrin/cholecystokinin family. Magainin subfamily. Expressed by the skin glands. Synthesized in the stomach and stored in a novel granular multinucleated cell in the gastric mucosa. Stored as active, processed peptides in large granules within the granular gland secretions of the skin.

The protein resides in the secreted. Functionally, PGLa and PGLa-H display a broad-spectrum of antibacterial activity against a range of Gram-positive and Gram-negative bacteria. PGLa also displays antifungal activity against C.albicans ATCC 14053. PGLa-H shows moderate antibacterial activity against the multidrug-resistant methicillin-resistant S.aureus (MRSA) but exhibits very little hemolytic activity. This chain is PYLa/PGLa B (pgla-b), found in Xenopus laevis (African clawed frog).